We begin with the raw amino-acid sequence, 183 residues long: Porphobilinogen deaminase (183 aa).

This sequence belongs to the HMBS family. In terms of assembly, monomer. It depends on dipyrromethane as a cofactor.

It carries out the reaction 4 porphobilinogen + H2O = hydroxymethylbilane + 4 NH4(+). The protein operates within porphyrin-containing compound metabolism; protoporphyrin-IX biosynthesis; coproporphyrinogen-III from 5-aminolevulinate: step 2/4. In terms of biological role, tetrapolymerization of the monopyrrole PBG into the hydroxymethylbilane pre-uroporphyrinogen in several discrete steps. This chain is Porphobilinogen deaminase (hemC), found in Yersinia intermedia.